Reading from the N-terminus, the 195-residue chain is Glycerol-3-phosphate acyltransferase (195 aa).

Helical transmembrane passes span 3–23, 52–72, 80–100, 113–133, and 147–167; these read FQVV…GFIL, LALL…AIAQ, ILFL…YLFF, LIFI…ICFL, and LIAL…IFAI.

It belongs to the PlsY family. Probably interacts with PlsX.

Its subcellular location is the cell inner membrane. It catalyses the reaction an acyl phosphate + sn-glycerol 3-phosphate = a 1-acyl-sn-glycero-3-phosphate + phosphate. It participates in lipid metabolism; phospholipid metabolism. In terms of biological role, catalyzes the transfer of an acyl group from acyl-phosphate (acyl-PO(4)) to glycerol-3-phosphate (G3P) to form lysophosphatidic acid (LPA). This enzyme utilizes acyl-phosphate as fatty acyl donor, but not acyl-CoA or acyl-ACP. The protein is Glycerol-3-phosphate acyltransferase of Ehrlichia ruminantium (strain Gardel).